Here is a 360-residue protein sequence, read N- to C-terminus: Alanine racemase (360 aa).

The active-site Proton acceptor; specific for D-alanine is Lys36. Lys36 carries the N6-(pyridoxal phosphate)lysine modification. Residue Arg132 coordinates substrate. Tyr256 acts as the Proton acceptor; specific for L-alanine in catalysis. Met304 lines the substrate pocket.

It belongs to the alanine racemase family. Pyridoxal 5'-phosphate is required as a cofactor.

The enzyme catalyses L-alanine = D-alanine. Its pathway is amino-acid biosynthesis; D-alanine biosynthesis; D-alanine from L-alanine: step 1/1. Functionally, catalyzes the interconversion of L-alanine and D-alanine. May also act on other amino acids. The polypeptide is Alanine racemase (alr) (Haemophilus influenzae (strain ATCC 51907 / DSM 11121 / KW20 / Rd)).